The primary structure comprises 146 residues: Hemoglobin subunit delta (146 aa).

Residues 2–146 (HLTGDEKSAV…VATALAHKYH (145 aa)) enclose the Globin domain. The residue at position 50 (serine 50) is a Phosphoserine. Heme b-binding residues include histidine 63 and histidine 92.

This sequence belongs to the globin family. Heterotetramer of two delta chains and two alpha chains. Red blood cells.

The chain is Hemoglobin subunit delta (HBD) from Saimiri sciureus (Common squirrel monkey).